Reading from the N-terminus, the 254-residue chain is Phosphoribosylaminoimidazole-succinocarboxamide synthase (254 aa).

The protein belongs to the SAICAR synthetase family.

The enzyme catalyses 5-amino-1-(5-phospho-D-ribosyl)imidazole-4-carboxylate + L-aspartate + ATP = (2S)-2-[5-amino-1-(5-phospho-beta-D-ribosyl)imidazole-4-carboxamido]succinate + ADP + phosphate + 2 H(+). It participates in purine metabolism; IMP biosynthesis via de novo pathway; 5-amino-1-(5-phospho-D-ribosyl)imidazole-4-carboxamide from 5-amino-1-(5-phospho-D-ribosyl)imidazole-4-carboxylate: step 1/2. The protein is Phosphoribosylaminoimidazole-succinocarboxamide synthase of Brucella anthropi (strain ATCC 49188 / DSM 6882 / CCUG 24695 / JCM 21032 / LMG 3331 / NBRC 15819 / NCTC 12168 / Alc 37) (Ochrobactrum anthropi).